A 436-amino-acid polypeptide reads, in one-letter code: GTPase Der (436 aa).

EngA-type G domains follow at residues 4–167 (PIVA…NKES) and 176–351 (IRLS…ENHK). GTP is bound by residues 10-17 (GKPNVGKS), 57-61 (DTGGI), 119-122 (NKVD), 182-189 (GRPNVGKS), 229-233 (DTAGM), and 294-297 (NKWD). Residues 352–436 (KRVQSSTLNE…PIHIIPRKRN (85 aa)) form the KH-like domain.

The protein belongs to the TRAFAC class TrmE-Era-EngA-EngB-Septin-like GTPase superfamily. EngA (Der) GTPase family. Associates with the 50S ribosomal subunit.

Functionally, GTPase that plays an essential role in the late steps of ribosome biogenesis. This Staphylococcus epidermidis (strain ATCC 35984 / DSM 28319 / BCRC 17069 / CCUG 31568 / BM 3577 / RP62A) protein is GTPase Der.